We begin with the raw amino-acid sequence, 522 residues long: MGNCCPPGSSSEPDPPPASSGSSRPAGSAGAAASPATISPSAAPAPAKPPAPIGPVLGRPMEDVKSIYTVGKELGRGQFGVTSLCTHKATGQRFACKTISKRKLSTKEDVEDVRREVQIMYHLAGQPGVVELKGAYEDKHAVHLVMELCAGGELFDRIIAKGHYTEHAASSLLRTIVEIIHTCHSMGVIHRDLKPENFLLLSKDEHAPLKATDFGLSVFFKEGEVFRDIVGSAYYIAPEVLKRSYGPEADIWSIGVMLYILLCGVPPFWAESEHGIFNSILRGHVDFSSEPWSRISHGAKDLVRRMLHSDPKQRISAYDVLNHPWIKEDGEAPDTPLDNAVLGRLKQFRAMNQFKKAALRVIAGCLSEEEIRGLKEMFKSMDSDNSGTITVDELRKGLAKKGTKLTEAEVQQLMEAADADGNGTIDYEEFITATMHMNRMDREEHLYTAFQYFDKDNSGYITIEELEQALREKGLMDGREIKDIISEVDADNDGRINYTEFVAMMRKGDPEANPKKRRDVVL.

Composition is skewed to low complexity over residues methionine 1–glutamate 12 and serine 19–alanine 45. The segment at methionine 1 to glycine 58 is disordered. Glycine 2 carries N-myristoyl glycine lipidation. Positions tyrosine 68–isoleucine 326 constitute a Protein kinase domain. Residues leucine 74–threonine 82 and lysine 97 contribute to the ATP site. The active-site Proton acceptor is aspartate 192. An autoinhibitory domain region spans residues alanine 332 to isoleucine 362. EF-hand domains lie at glutamate 369–lysine 404, leucine 405–methionine 440, aspartate 441–methionine 476, and glutamate 480–glutamate 511. 20 residues coordinate Ca(2+): aspartate 382, aspartate 384, serine 386, threonine 388, glutamate 393, aspartate 418, aspartate 420, asparagine 422, threonine 424, glutamate 429, aspartate 454, aspartate 456, serine 458, tyrosine 460, glutamate 465, aspartate 489, aspartate 491, aspartate 493, arginine 495, and glutamate 500.

This sequence belongs to the protein kinase superfamily. Ser/Thr protein kinase family. CDPK subfamily.

Its subcellular location is the membrane. The enzyme catalyses L-seryl-[protein] + ATP = O-phospho-L-seryl-[protein] + ADP + H(+). The catalysed reaction is L-threonyl-[protein] + ATP = O-phospho-L-threonyl-[protein] + ADP + H(+). With respect to regulation, activated by calcium. Autophosphorylation may play an important role in the regulation of the kinase activity. Its function is as follows. May play a role in signal transduction pathways that involve calcium as a second messenger. The sequence is that of Calcium-dependent protein kinase 14 from Oryza sativa subsp. japonica (Rice).